Here is a 570-residue protein sequence, read N- to C-terminus: Adenine deaminase 2 (570 aa).

Belongs to the metallo-dependent hydrolases superfamily. Adenine deaminase family. Mn(2+) serves as cofactor.

The enzyme catalyses adenine + H2O + H(+) = hypoxanthine + NH4(+). This is Adenine deaminase 2 from Carboxydothermus hydrogenoformans (strain ATCC BAA-161 / DSM 6008 / Z-2901).